The following is a 259-amino-acid chain: Hydroxyethylthiazole kinase (259 aa).

Residue M37 participates in substrate binding. The ATP site is built by R113 and T158. G185 contributes to the substrate binding site.

Belongs to the Thz kinase family. Mg(2+) serves as cofactor.

The catalysed reaction is 5-(2-hydroxyethyl)-4-methylthiazole + ATP = 4-methyl-5-(2-phosphooxyethyl)-thiazole + ADP + H(+). The protein operates within cofactor biosynthesis; thiamine diphosphate biosynthesis; 4-methyl-5-(2-phosphoethyl)-thiazole from 5-(2-hydroxyethyl)-4-methylthiazole: step 1/1. In terms of biological role, catalyzes the phosphorylation of the hydroxyl group of 4-methyl-5-beta-hydroxyethylthiazole (THZ). The protein is Hydroxyethylthiazole kinase of Helicobacter pylori (strain Shi470).